Reading from the N-terminus, the 650-residue chain is Threonine--tRNA ligase, chloroplastic/mitochondrial 2 (650 aa).

Residues cysteine 347, histidine 398, and histidine 524 each coordinate Zn(2+).

The protein belongs to the class-II aminoacyl-tRNA synthetase family.

It is found in the plastid. It localises to the chloroplast. The protein resides in the mitochondrion. It carries out the reaction tRNA(Thr) + L-threonine + ATP = L-threonyl-tRNA(Thr) + AMP + diphosphate + H(+). The polypeptide is Threonine--tRNA ligase, chloroplastic/mitochondrial 2 (Arabidopsis thaliana (Mouse-ear cress)).